The following is a 227-amino-acid chain: UPF0173 metal-dependent hydrolase BCAH187_A4741 (227 aa).

It belongs to the UPF0173 family.

This Bacillus cereus (strain AH187) protein is UPF0173 metal-dependent hydrolase BCAH187_A4741.